Consider the following 281-residue polypeptide: Phosphatidylglycerol--prolipoprotein diacylglyceryl transferase (281 aa).

A run of 7 helical transmembrane segments spans residues Ile-11–Phe-31, Leu-57–Tyr-77, Val-89–Val-109, Ile-121–Ile-141, Pro-194–Phe-214, Gly-222–Phe-242, and Ile-255–Tyr-275. Arg-140 contacts a 1,2-diacyl-sn-glycero-3-phospho-(1'-sn-glycerol).

This sequence belongs to the Lgt family.

Its subcellular location is the cell inner membrane. It catalyses the reaction L-cysteinyl-[prolipoprotein] + a 1,2-diacyl-sn-glycero-3-phospho-(1'-sn-glycerol) = an S-1,2-diacyl-sn-glyceryl-L-cysteinyl-[prolipoprotein] + sn-glycerol 1-phosphate + H(+). The protein operates within protein modification; lipoprotein biosynthesis (diacylglyceryl transfer). Catalyzes the transfer of the diacylglyceryl group from phosphatidylglycerol to the sulfhydryl group of the N-terminal cysteine of a prolipoprotein, the first step in the formation of mature lipoproteins. The polypeptide is Phosphatidylglycerol--prolipoprotein diacylglyceryl transferase (Buchnera aphidicola subsp. Acyrthosiphon pisum (strain Tuc7)).